We begin with the raw amino-acid sequence, 433 residues long: UPF0597 protein DNO_0106 (433 aa).

It belongs to the UPF0597 family.

The protein is UPF0597 protein DNO_0106 of Dichelobacter nodosus (strain VCS1703A).